An 88-amino-acid chain; its full sequence is Large ribosomal subunit protein bL27 (88 aa).

A disordered region spans residues 1-21; it reads MAHKKAGGSSRNGRDSDGRRL.

It belongs to the bacterial ribosomal protein bL27 family.

This is Large ribosomal subunit protein bL27 from Methylobacterium nodulans (strain LMG 21967 / CNCM I-2342 / ORS 2060).